The sequence spans 144 residues: Monobin (144 aa).

An N-terminal signal peptide occupies residues 1–16; it reads MRLLALFAFAVAVVSA. Gln-17 is subject to Pyrrolidone carboxylic acid. The BPTI/Kunitz inhibitor 1 domain maps to 18–73; sequence RNQMCQQPRTQGSCDASNQITKFFYTGSGCTSAPVCSDTDGGYGTEDECIQACTVQ. 3 disulfide bridges follow: Cys-22-Cys-70, Cys-31-Cys-53, and Cys-47-Cys-66. Residues 74–85 form a linker region; it reads GGHHNEGAGEEG. Positions 86–139 constitute a BPTI/Kunitz inhibitor domain; that stretch reads CSGDPPRGDCGGQVEERYYFDSTTRTCQTFEYRGCSSGNPDNSYETEIECEIAC. 3 disulfide bridges follow: Cys-86-Cys-139, Cys-95-Cys-120, and Cys-112-Cys-135. Residues 92 to 94 carry the Cell attachment site motif; that stretch reads RGD.

In terms of processing, the N-terminus is blocked. Expressed in salivary glands.

It is found in the cytoplasmic vesicle. The protein localises to the secretory vesicle. It localises to the secreted. Tick salivary thrombin inhibitor that plays an important part in the anti-hemostatic strategy of ticks. The protein is Monobin of Argas monolakensis (Mono lake bird tick).